The sequence spans 211 residues: MTIGVVGRKCGMTRIFTEEGVSIPVTVIEIEPNRVTQFKTEETDGYRAVQVTVGERRASRVTAAQAGHFAKANVAAGRTVMEFRLEEGDYQAGDQINAEIFAAGQLVDVTGQSKGKGFQGTIKRWNFRGQDNTHGNSVSHRVPGSIGQCQTPGRVFKGKKMSGHMGAERVTVQSLELVRVDAERNLLLVKGAVPGATGGNLVVRPAAKARG.

Gln-150 is subject to N5-methylglutamine.

The protein belongs to the universal ribosomal protein uL3 family. As to quaternary structure, part of the 50S ribosomal subunit. Forms a cluster with proteins L14 and L19. Post-translationally, methylated by PrmB.

Its function is as follows. One of the primary rRNA binding proteins, it binds directly near the 3'-end of the 23S rRNA, where it nucleates assembly of the 50S subunit. This is Large ribosomal subunit protein uL3 from Pseudomonas savastanoi pv. phaseolicola (strain 1448A / Race 6) (Pseudomonas syringae pv. phaseolicola (strain 1448A / Race 6)).